The sequence spans 248 residues: Ubiquinone/menaquinone biosynthesis C-methyltransferase UbiE (248 aa).

Residues serine 68 and aspartate 92 each coordinate S-adenosyl-L-methionine.

This sequence belongs to the class I-like SAM-binding methyltransferase superfamily. MenG/UbiE family.

The enzyme catalyses a 2-demethylmenaquinol + S-adenosyl-L-methionine = a menaquinol + S-adenosyl-L-homocysteine + H(+). It carries out the reaction a 2-methoxy-6-(all-trans-polyprenyl)benzene-1,4-diol + S-adenosyl-L-methionine = a 5-methoxy-2-methyl-3-(all-trans-polyprenyl)benzene-1,4-diol + S-adenosyl-L-homocysteine + H(+). The protein operates within quinol/quinone metabolism; menaquinone biosynthesis; menaquinol from 1,4-dihydroxy-2-naphthoate: step 2/2. It functions in the pathway cofactor biosynthesis; ubiquinone biosynthesis. Methyltransferase required for the conversion of demethylmenaquinol (DMKH2) to menaquinol (MKH2) and the conversion of 2-polyprenyl-6-methoxy-1,4-benzoquinol (DDMQH2) to 2-polyprenyl-3-methyl-6-methoxy-1,4-benzoquinol (DMQH2). In Rickettsia conorii (strain ATCC VR-613 / Malish 7), this protein is Ubiquinone/menaquinone biosynthesis C-methyltransferase UbiE.